A 534-amino-acid chain; its full sequence is Serine/threonine-protein phosphatase 2B catalytic subunit (534 aa).

3 residues coordinate Fe cation: aspartate 88, histidine 90, and aspartate 116. Zn(2+) is bound by residues aspartate 116 and asparagine 148. Histidine 149 (proton donor) is an active-site residue. 2 residues coordinate Zn(2+): histidine 197 and histidine 279. 2 disordered regions span residues 375–398 and 475–534; these read LEDE…DVES and PSHE…TREA. 2 stretches are compositionally biased toward basic and acidic residues: residues 475-497 and 524-534; these read PSHE…RAQQ and QRDAARETREA.

The protein belongs to the PPP phosphatase family. PP-2B subfamily. In terms of assembly, composed of two components (A and B), the A component is the catalytic subunit and the B component confers calcium sensitivity. Requires Fe(3+) as cofactor. Zn(2+) serves as cofactor.

The enzyme catalyses O-phospho-L-seryl-[protein] + H2O = L-seryl-[protein] + phosphate. The catalysed reaction is O-phospho-L-threonyl-[protein] + H2O = L-threonyl-[protein] + phosphate. Its function is as follows. Calcium-dependent, calmodulin-stimulated protein phosphatase. This subunit may have a role in the calmodulin activation of calcineurin. This chain is Serine/threonine-protein phosphatase 2B catalytic subunit (cnaA), found in Aspergillus fumigatus (strain ATCC MYA-4609 / CBS 101355 / FGSC A1100 / Af293) (Neosartorya fumigata).